A 181-amino-acid polypeptide reads, in one-letter code: Salmonella anti-inflammatory response activator (181 aa).

The helical transmembrane segment at 4 to 24 (FVYIYILVIYGSYLWFSLGGN) threads the bilayer.

As to quaternary structure, interacts with host (human) STAT3.

It localises to the membrane. The protein localises to the host cytoplasm. A Salmonella strain-specific effector that induces a host STAT3-dependent anti-inflammatory pathway. In bacteria-infected host cells (human) leads to phosphorylation of host STAT3, at least on 'Tyr-705' and interleukin-10 (IL-10, IL10) production; expressing the gene alone in host cells induces STAT3 phosphorylation and IL-10 production. IL-10 production requires STAT3 in infected cells. Contributes to virulence in mouse infection models. Encoded in only a few S.typhimurium serovars, it may be a specific effector for adaptation to bovine hosts. This Salmonella typhimurium (strain 14028s / SGSC 2262) protein is Salmonella anti-inflammatory response activator.